A 97-amino-acid chain; its full sequence is MASQPKSFEEQLAKLQEIVTKLQQGNVSLNDSIELFKEGMTLSNDLKGQLNEAETTLAQMMDENGQLHPAEEKGDDVSNNGVQNQGYKSQFLDGDVF.

Residues 64–97 (NGQLHPAEEKGDDVSNNGVQNQGYKSQFLDGDVF) are disordered. Positions 77-88 (VSNNGVQNQGYK) are enriched in polar residues.

Belongs to the XseB family. In terms of assembly, heterooligomer composed of large and small subunits.

It is found in the cytoplasm. It carries out the reaction Exonucleolytic cleavage in either 5'- to 3'- or 3'- to 5'-direction to yield nucleoside 5'-phosphates.. Its function is as follows. Bidirectionally degrades single-stranded DNA into large acid-insoluble oligonucleotides, which are then degraded further into small acid-soluble oligonucleotides. This is Exodeoxyribonuclease 7 small subunit from Limosilactobacillus fermentum (strain NBRC 3956 / LMG 18251) (Lactobacillus fermentum).